Here is a 209-residue protein sequence, read N- to C-terminus: Large ribosomal subunit protein uL3 (209 aa).

Positions 112 to 122 (GTTRGHGTQGN) are enriched in polar residues. The tract at residues 112-146 (GTTRGHGTQGNIKRWGQSRGPETHGSRYHRIPGSM) is disordered.

Belongs to the universal ribosomal protein uL3 family. In terms of assembly, part of the 50S ribosomal subunit. Forms a cluster with proteins L14 and L19.

Functionally, one of the primary rRNA binding proteins, it binds directly near the 3'-end of the 23S rRNA, where it nucleates assembly of the 50S subunit. The chain is Large ribosomal subunit protein uL3 from Lactobacillus gasseri (strain ATCC 33323 / DSM 20243 / BCRC 14619 / CIP 102991 / JCM 1131 / KCTC 3163 / NCIMB 11718 / NCTC 13722 / AM63).